We begin with the raw amino-acid sequence, 72 residues long: Bowman-Birk type trypsin inhibitor (72 aa).

7 cysteine pairs are disulfide-bonded: cysteine 12-cysteine 66, cysteine 13-cysteine 28, cysteine 16-cysteine 62, cysteine 18-cysteine 26, cysteine 36-cysteine 43, cysteine 40-cysteine 55, and cysteine 45-cysteine 53.

This sequence belongs to the Bowman-Birk serine protease inhibitor family.

The sequence is that of Bowman-Birk type trypsin inhibitor from Vigna radiata var. radiata (Mung bean).